Consider the following 139-residue polypeptide: Large ribosomal subunit protein uL22 (139 aa).

Residues 1–22 (MVSENEKTRRPKRSIQHRQNKD) form a disordered region. Over residues 9-18 (RRPKRSIQHR) the composition is skewed to basic residues.

The protein belongs to the universal ribosomal protein uL22 family. Part of the 50S ribosomal subunit.

This protein binds specifically to 23S rRNA; its binding is stimulated by other ribosomal proteins, e.g. L4, L17, and L20. It is important during the early stages of 50S assembly. It makes multiple contacts with different domains of the 23S rRNA in the assembled 50S subunit and ribosome. Its function is as follows. The globular domain of the protein is located near the polypeptide exit tunnel on the outside of the subunit, while an extended beta-hairpin is found that lines the wall of the exit tunnel in the center of the 70S ribosome. The chain is Large ribosomal subunit protein uL22 from Pseudothermotoga lettingae (strain ATCC BAA-301 / DSM 14385 / NBRC 107922 / TMO) (Thermotoga lettingae).